We begin with the raw amino-acid sequence, 266 residues long: ATP synthase subunit a (266 aa).

The next 7 helical transmembrane spans lie at 41–61, 98–118, 119–139, 152–172, 178–198, 216–236, and 237–257; these read IDTL…FWLA, VIAP…LMDL, VPID…WKIL, LSVL…GGWL, HPLG…EFIA, LVFI…GTPW, and AIFH…LTVV.

Belongs to the ATPase A chain family. In terms of assembly, F-type ATPases have 2 components, CF(1) - the catalytic core - and CF(0) - the membrane proton channel. CF(1) has five subunits: alpha(3), beta(3), gamma(1), delta(1), epsilon(1). CF(0) has three main subunits: a(1), b(2) and c(9-12). The alpha and beta chains form an alternating ring which encloses part of the gamma chain. CF(1) is attached to CF(0) by a central stalk formed by the gamma and epsilon chains, while a peripheral stalk is formed by the delta and b chains.

The protein localises to the cell inner membrane. In terms of biological role, key component of the proton channel; it plays a direct role in the translocation of protons across the membrane. This Halorhodospira halophila (strain DSM 244 / SL1) (Ectothiorhodospira halophila (strain DSM 244 / SL1)) protein is ATP synthase subunit a.